Consider the following 485-residue polypeptide: Dynein axonemal assembly factor 3 (485 aa).

It belongs to the DNAAF3 family.

The protein resides in the cytoplasm. The protein localises to the dynein axonemal particle. In terms of biological role, required for the assembly of axonemal inner and outer dynein arms. Involved in preassembly of dyneins into complexes before their transport into cilia. This Xenopus laevis (African clawed frog) protein is Dynein axonemal assembly factor 3 (dnaaf3).